The primary structure comprises 306 residues: Nucleotide-binding protein MUL_1815 (306 aa).

29-36 serves as a coordination point for ATP; that stretch reads GLSGAGRG. 80-83 lines the GTP pocket; sequence DVRS.

This sequence belongs to the RapZ-like family.

Displays ATPase and GTPase activities. The polypeptide is Nucleotide-binding protein MUL_1815 (Mycobacterium ulcerans (strain Agy99)).